The following is a 467-amino-acid chain: Variant surface glycoprotein 7 (467 aa).

The segment covering 77–87 (TIAAGATNTKL) has biased composition (polar residues). The interval 77-133 (TIAAGATNTKLSGHHPNQGRRGRRRSSSARPNNSKGNSPSKRAGGAVRGETPASGRL) is disordered. Positions 93 to 103 (NQGRRGRRRSS) are enriched in basic residues. Residues 107–116 (PNNSKGNSPS) are compositionally biased toward polar residues. N-linked (GlcNAc...) asparagine glycans are attached at residues Asn108 and Asn252. Residues 382-407 (AEKVENPRSQGNPETAENKKEGGNTA) are disordered. An N-linked (GlcNAc...) asparagine glycan is attached at Asn416. Residue Asp444 is the site of GPI-anchor amidated aspartate attachment. Residues 445–467 (SSFLLSKQFALSVVSAAFAALLF) constitute a propeptide, removed in mature form.

The protein resides in the cell membrane. Functionally, VSG forms a coat on the surface of the parasite. The trypanosome evades the immune response of the host by expressing a series of antigenically distinct VSGs from an estimated 1000 VSG genes. This Trypanosoma brucei rhodesiense protein is Variant surface glycoprotein 7.